We begin with the raw amino-acid sequence, 102 residues long: CRISPR-associated endoribonuclease Cas2 1 (102 aa).

Residue aspartate 17 coordinates Mg(2+).

It belongs to the CRISPR-associated endoribonuclease Cas2 protein family. Homodimer, forms a heterotetramer with a Cas1 homodimer. Mg(2+) serves as cofactor.

CRISPR (clustered regularly interspaced short palindromic repeat), is an adaptive immune system that provides protection against mobile genetic elements (viruses, transposable elements and conjugative plasmids). CRISPR clusters contain sequences complementary to antecedent mobile elements and target invading nucleic acids. CRISPR clusters are transcribed and processed into CRISPR RNA (crRNA). Functions as a ssRNA-specific endoribonuclease. Involved in the integration of spacer DNA into the CRISPR cassette. This is CRISPR-associated endoribonuclease Cas2 1 from Rhodospirillum rubrum (strain ATCC 11170 / ATH 1.1.1 / DSM 467 / LMG 4362 / NCIMB 8255 / S1).